A 66-amino-acid chain; its full sequence is Neurotoxin-like protein STR1 (66 aa).

In terms of domain architecture, LCN-type CS-alpha/beta spans 2–65; that stretch reads RDGYIVHDGT…VWGEDGFMCW (64 aa). 4 disulfide bridges follow: Cys13–Cys64, Cys17–Cys40, Cys26–Cys45, and Cys30–Cys47.

Belongs to the long (4 C-C) scorpion toxin superfamily. Sodium channel inhibitor family. Beta subfamily. In terms of tissue distribution, expressed by the venom gland.

The protein localises to the secreted. In terms of biological role, this protein is not toxic. This is Neurotoxin-like protein STR1 from Androctonus australis (Sahara scorpion).